The chain runs to 133 residues: Small ribosomal subunit protein uS8 (133 aa).

The protein belongs to the universal ribosomal protein uS8 family. Part of the 30S ribosomal subunit. Contacts proteins S5 and S12.

Functionally, one of the primary rRNA binding proteins, it binds directly to 16S rRNA central domain where it helps coordinate assembly of the platform of the 30S subunit. The sequence is that of Small ribosomal subunit protein uS8 from Synechococcus sp. (strain WH7803).